The chain runs to 95 residues: Immunogenic miracidial antigen 8C (95 aa).

The segment covering 1–15 (EFTISFSSPVISTGQ) has biased composition (polar residues). Residues 1–95 (EFTISFSSPV…PKKYGSGHKY (95 aa)) are disordered. Residues 20–41 (GDEDYHDGDDDVDYTDDVDDVD) are compositionally biased toward acidic residues. Over residues 45–59 (GSPSQLLQGGYQRNQ) the composition is skewed to polar residues.

It belongs to the immunogenic miracidial antigen family.

This chain is Immunogenic miracidial antigen 8C (8C), found in Schistosoma japonicum (Blood fluke).